The following is a 68-amino-acid chain: DNA gyrase inhibitor YacG (68 aa).

Positions 12, 15, 30, and 34 each coordinate Zn(2+). Residues lysine 48–aspartate 68 are disordered.

It belongs to the DNA gyrase inhibitor YacG family. Interacts with GyrB. The cofactor is Zn(2+).

Its function is as follows. Inhibits all the catalytic activities of DNA gyrase by preventing its interaction with DNA. Acts by binding directly to the C-terminal domain of GyrB, which probably disrupts DNA binding by the gyrase. The chain is DNA gyrase inhibitor YacG from Acinetobacter baylyi (strain ATCC 33305 / BD413 / ADP1).